A 129-amino-acid polypeptide reads, in one-letter code: Small ribosomal subunit protein uS11 (129 aa).

This sequence belongs to the universal ribosomal protein uS11 family. As to quaternary structure, part of the 30S ribosomal subunit. Interacts with proteins S7 and S18. Binds to IF-3.

Its function is as follows. Located on the platform of the 30S subunit, it bridges several disparate RNA helices of the 16S rRNA. Forms part of the Shine-Dalgarno cleft in the 70S ribosome. The protein is Small ribosomal subunit protein uS11 of Francisella tularensis subsp. tularensis (strain FSC 198).